Reading from the N-terminus, the 196-residue chain is Phosphoheptose isomerase (196 aa).

An SIS domain is found at 33–192 (LIQSLKNGGK…ESECGENGNT (160 aa)). Substrate is bound at residue 48-50 (NGG). Positions 57 and 61 each coordinate Zn(2+). Substrate-binding positions include E61, 90–91 (ND), 116–118 (STS), S121, and Q168. Zn(2+) is bound by residues Q168 and H176.

It belongs to the SIS family. GmhA subfamily. In terms of assembly, homotetramer. Zn(2+) serves as cofactor.

The protein resides in the cytoplasm. It carries out the reaction 2 D-sedoheptulose 7-phosphate = D-glycero-alpha-D-manno-heptose 7-phosphate + D-glycero-beta-D-manno-heptose 7-phosphate. It functions in the pathway carbohydrate biosynthesis; D-glycero-D-manno-heptose 7-phosphate biosynthesis; D-glycero-alpha-D-manno-heptose 7-phosphate and D-glycero-beta-D-manno-heptose 7-phosphate from sedoheptulose 7-phosphate: step 1/1. Catalyzes the isomerization of sedoheptulose 7-phosphate in D-glycero-D-manno-heptose 7-phosphate. This Helicobacter hepaticus (strain ATCC 51449 / 3B1) protein is Phosphoheptose isomerase.